A 123-amino-acid chain; its full sequence is UPF0102 protein Csal_2201 (123 aa).

The protein belongs to the UPF0102 family.

The protein is UPF0102 protein Csal_2201 of Chromohalobacter salexigens (strain ATCC BAA-138 / DSM 3043 / CIP 106854 / NCIMB 13768 / 1H11).